Reading from the N-terminus, the 194-residue chain is Protein A43 (194 aa).

The first 22 residues, 1 to 22 (MMMMKWIISILTMSIMPVLAYS), serve as a signal peptide directing secretion. At 23–165 (SSIFRFHSED…YKDINDKYND (143 aa)) the chain is on the extracellular side. 2 N-linked (GlcNAc...) asparagine; by host glycosylation sites follow: N65 and N114. The helical transmembrane segment at 166–186 (IYDFTAICMLIASTLIVTIYV) threads the bilayer. Topologically, residues 187–194 (FKKIKMNS) are cytoplasmic.

This sequence belongs to the orthopoxvirus OPG172 protein family.

The protein localises to the host membrane. Its subcellular location is the host cell surface. The sequence is that of Protein A43 (OPG172) from Homo sapiens (Human).